Here is a 365-residue protein sequence, read N- to C-terminus: Sulfate/thiosulfate import ATP-binding protein CysA (365 aa).

The ABC transporter domain maps to 3–237; sequence IEIARIKKSF…PATRFVLEFM (235 aa). 35–42 contacts ATP; sequence GPSGSGKT.

It belongs to the ABC transporter superfamily. Sulfate/tungstate importer (TC 3.A.1.6) family. The complex is composed of two ATP-binding proteins (CysA), two transmembrane proteins (CysT and CysW) and a solute-binding protein (CysP).

It is found in the cell inner membrane. The catalysed reaction is sulfate(out) + ATP + H2O = sulfate(in) + ADP + phosphate + H(+). It carries out the reaction thiosulfate(out) + ATP + H2O = thiosulfate(in) + ADP + phosphate + H(+). Functionally, part of the ABC transporter complex CysAWTP involved in sulfate/thiosulfate import. Responsible for energy coupling to the transport system. The chain is Sulfate/thiosulfate import ATP-binding protein CysA from Salmonella typhimurium (strain LT2 / SGSC1412 / ATCC 700720).